We begin with the raw amino-acid sequence, 269 residues long: GTP cyclohydrolase FolE2 (269 aa).

The protein belongs to the GTP cyclohydrolase IV family.

It catalyses the reaction GTP + H2O = 7,8-dihydroneopterin 3'-triphosphate + formate + H(+). It participates in cofactor biosynthesis; 7,8-dihydroneopterin triphosphate biosynthesis; 7,8-dihydroneopterin triphosphate from GTP: step 1/1. In terms of biological role, converts GTP to 7,8-dihydroneopterin triphosphate. This Burkholderia vietnamiensis (strain G4 / LMG 22486) (Burkholderia cepacia (strain R1808)) protein is GTP cyclohydrolase FolE2.